The chain runs to 640 residues: Chaperone protein HtpG (640 aa).

The a; substrate-binding stretch occupies residues 1–352 (MTEQTATQNY…SADLPLNVSR (352 aa)). The tract at residues 353–571 (ELLQESRDVK…DGELSPQLIR (219 aa)) is b. The tract at residues 572–640 (MLKQAGQAVP…VKRINSLLLK (69 aa)) is c.

It belongs to the heat shock protein 90 family. In terms of assembly, homodimer.

It is found in the cytoplasm. Its function is as follows. Molecular chaperone. Has ATPase activity. The chain is Chaperone protein HtpG from Acinetobacter baylyi (strain ATCC 33305 / BD413 / ADP1).